The primary structure comprises 378 residues: Endopolygalacturonase I (378 aa).

The N-terminal stretch at 1 to 20 is a signal peptide; sequence MHLNTTLLVSLALGAASVLA. Positions 21–39 are excised as a propeptide; sequence SPAPPAITAPPTAEEIAKR. An intrachain disulfide couples Cys-43 to Cys-61. Residue Thr-44 is glycosylated (O-linked (Man...) threonine). Ser-46, Ser-48, Ser-52, Ser-53, Ser-55, Ser-57, and Ser-62 each carry an O-linked (Man...) serine glycan. An O-linked (Man...) threonine glycan is attached at Thr-63. Ser-73 carries O-linked (Man...) serine glycosylation. PbH1 repeat units lie at residues 174–204, 205–226, 227–247, 256–277, and 285–307; these read SDYL…DIGT, STYV…AVNS, GENI…SIGS, VKNV…RIKT, and VSDV…VVQQ. Asp-219 functions as the Proton donor in the catalytic mechanism. Cys-221 and Cys-237 are oxidised to a cystine. The active site involves His-241. Asn-258 is a glycosylation site (N-linked (GlcNAc...) asparagine). Intrachain disulfides connect Cys-345–Cys-350 and Cys-369–Cys-378.

It belongs to the glycosyl hydrolase 28 family.

It is found in the secreted. It carries out the reaction (1,4-alpha-D-galacturonosyl)n+m + H2O = (1,4-alpha-D-galacturonosyl)n + (1,4-alpha-D-galacturonosyl)m.. Functionally, involved in maceration and soft-rotting of plant tissue. Hydrolyzes the 1,4-alpha glycosidic bonds of de-esterified pectate in the smooth region of the plant cell wall. This is Endopolygalacturonase I (pgaI) from Aspergillus aculeatus.